Consider the following 616-residue polypeptide: Dihydroxy-acid dehydratase (616 aa).

Aspartate 81 provides a ligand contact to Mg(2+). Cysteine 122 serves as a coordination point for [2Fe-2S] cluster. 2 residues coordinate Mg(2+): aspartate 123 and lysine 124. Lysine 124 carries the post-translational modification N6-carboxylysine. Position 195 (cysteine 195) interacts with [2Fe-2S] cluster. Residue glutamate 491 participates in Mg(2+) binding. Serine 517 functions as the Proton acceptor in the catalytic mechanism.

The protein belongs to the IlvD/Edd family. As to quaternary structure, homodimer. Requires [2Fe-2S] cluster as cofactor. It depends on Mg(2+) as a cofactor.

The enzyme catalyses (2R)-2,3-dihydroxy-3-methylbutanoate = 3-methyl-2-oxobutanoate + H2O. It catalyses the reaction (2R,3R)-2,3-dihydroxy-3-methylpentanoate = (S)-3-methyl-2-oxopentanoate + H2O. It participates in amino-acid biosynthesis; L-isoleucine biosynthesis; L-isoleucine from 2-oxobutanoate: step 3/4. Its pathway is amino-acid biosynthesis; L-valine biosynthesis; L-valine from pyruvate: step 3/4. Functions in the biosynthesis of branched-chain amino acids. Catalyzes the dehydration of (2R,3R)-2,3-dihydroxy-3-methylpentanoate (2,3-dihydroxy-3-methylvalerate) into 2-oxo-3-methylpentanoate (2-oxo-3-methylvalerate) and of (2R)-2,3-dihydroxy-3-methylbutanoate (2,3-dihydroxyisovalerate) into 2-oxo-3-methylbutanoate (2-oxoisovalerate), the penultimate precursor to L-isoleucine and L-valine, respectively. The protein is Dihydroxy-acid dehydratase of Shigella flexneri.